We begin with the raw amino-acid sequence, 353 residues long: Protein MGF 360-13L (353 aa).

This sequence belongs to the asfivirus MGF 360 family.

In terms of biological role, plays a role in virus cell tropism, and may be required for efficient virus replication in macrophages. In African swine fever virus (isolate Warthog/Namibia/Wart80/1980) (ASFV), this protein is Protein MGF 360-13L.